The chain runs to 182 residues: Large ribosomal subunit protein uL13 (182 aa).

The protein belongs to the universal ribosomal protein uL13 family. Part of the 50S ribosomal subunit.

In terms of biological role, this protein is one of the early assembly proteins of the 50S ribosomal subunit, although it is not seen to bind rRNA by itself. It is important during the early stages of 50S assembly. The sequence is that of Large ribosomal subunit protein uL13 from Pyrobaculum neutrophilum (strain DSM 2338 / JCM 9278 / NBRC 100436 / V24Sta) (Thermoproteus neutrophilus).